The primary structure comprises 168 residues: UPF0478 protein SH1183 (168 aa).

A helical transmembrane segment spans residues 7-27; that stretch reads IAGIIAAIAFLVLCIGIVVVL. The interval 144 to 168 is disordered; it reads YRNTSVGNDANHSNENYTTNVEKNF.

This sequence belongs to the UPF0478 family.

The protein localises to the cell membrane. The sequence is that of UPF0478 protein SH1183 from Staphylococcus haemolyticus (strain JCSC1435).